A 263-amino-acid chain; its full sequence is Small ribosomal subunit protein eS4 (263 aa).

The region spanning 42-104 (LPLIVFLRNR…TGEHFRLVYD (63 aa)) is the S4 RNA-binding domain.

The protein belongs to the eukaryotic ribosomal protein eS4 family.

The sequence is that of Small ribosomal subunit protein eS4 (RPS4Y1) from Pongo pygmaeus (Bornean orangutan).